Consider the following 440-residue polypeptide: Glycerol-3-phosphate dehydrogenase [NAD(+)], chloroplastic (440 aa).

A chloroplast-targeting transit peptide spans 1-47 (MAAAAAATFLPHTPTPRRRLAVAVHSPTRRRLSLVFSGPPDGALSVA). The interval 57 to 76 (EEAAAAVSAPRGGGGGGGKE) is disordered. NAD(+) contacts are provided by residues 114–119 (GGGSFG), Phe191, Lys214, and Ala248. Residue Lys214 coordinates substrate. Lys299 functions as the Proton acceptor in the catalytic mechanism. NAD(+) contacts are provided by Arg363 and Glu389. Substrate is bound at residue 363 to 364 (RN).

Belongs to the NAD-dependent glycerol-3-phosphate dehydrogenase family.

Its subcellular location is the plastid. It is found in the chloroplast. It catalyses the reaction sn-glycerol 3-phosphate + NAD(+) = dihydroxyacetone phosphate + NADH + H(+). It functions in the pathway membrane lipid metabolism; glycerophospholipid metabolism. Functionally, required to supply glycerol-3-phosphate in the chloroplast for the synthesis of glycerolipids. This is Glycerol-3-phosphate dehydrogenase [NAD(+)], chloroplastic from Oryza sativa subsp. japonica (Rice).